The sequence spans 1227 residues: Pesticidal crystal protein Cry1Be (1227 aa).

It belongs to the delta endotoxin family.

Promotes colloidosmotic lysis by binding to the midgut epithelial cells of many lepidopteran larvae. This is Pesticidal crystal protein Cry1Be (cry1Be) from Bacillus thuringiensis.